The sequence spans 337 residues: DnaJ homolog dnj-2 (337 aa).

Residues 4–24 (AIAAPILFLLVSFFVQECESV) form a helical membrane-spanning segment. Residues 36 to 105 (NCYDVLEVNR…EAKTNYDYYL (70 aa)) enclose the J domain. The next 2 helical transmembrane spans lie at 127 to 147 (VDLRIVIVGTILIISLFQFLS) and 222 to 242 (LAWHTIIFPLTIFRYIKWTAL). A coiled-coil region spans residues 293-323 (LKRNCATWKAERDAAEQEKMAQSGRYKRYKR).

Belongs to the DNAJC25 family.

It localises to the membrane. The protein is DnaJ homolog dnj-2 (dnj-2) of Caenorhabditis elegans.